The primary structure comprises 69 residues: DNA-directed RNA polymerase subunit omega (69 aa).

Belongs to the RNA polymerase subunit omega family. The RNAP catalytic core consists of 2 alpha, 1 beta, 1 beta' and 1 omega subunit. When a sigma factor is associated with the core the holoenzyme is formed, which can initiate transcription.

The catalysed reaction is RNA(n) + a ribonucleoside 5'-triphosphate = RNA(n+1) + diphosphate. In terms of biological role, promotes RNA polymerase assembly. Latches the N- and C-terminal regions of the beta' subunit thereby facilitating its interaction with the beta and alpha subunits. The polypeptide is DNA-directed RNA polymerase subunit omega (Geotalea daltonii (strain DSM 22248 / JCM 15807 / FRC-32) (Geobacter daltonii)).